We begin with the raw amino-acid sequence, 105 residues long: uncharacterized protein (105 aa).

Its subcellular location is the cytoplasm. The protein localises to the nucleus. This is an uncharacterized protein from Schizosaccharomyces pombe (strain 972 / ATCC 24843) (Fission yeast).